A 407-amino-acid polypeptide reads, in one-letter code: Probable protein S-acyltransferase 9 (407 aa).

The next 2 membrane-spanning stretches (helical) occupy residues 28–48 and 62–82; these read WSIPFTFLLIITPVCFFSVFV and GHVFLVAGVLFTVFVLILLFL. The DHHC domain occupies 136 to 179; sequence KYCDTCMLYRPPRCSHCSICNNCVERFDHHCPWRNYRYFFMFVS. Residue Cys-166 is the S-palmitoyl cysteine intermediate of the active site. The next 2 helical transmembrane spans lie at 174-194 and 217-237; these read FFMFVSSATILCIYIFSMSAL and AVMLMIYCFISLWFVGGLTGF. The segment at 300–407 is disordered; it reads LATTWERPEE…RSYAAAEEGR (108 aa). Positions 346 to 356 are enriched in basic and acidic residues; it reads DTAHHKIDIDQ.

It belongs to the DHHC palmitoyltransferase family. In terms of tissue distribution, mainly expressed in seeds.

It is found in the cell membrane. The catalysed reaction is L-cysteinyl-[protein] + hexadecanoyl-CoA = S-hexadecanoyl-L-cysteinyl-[protein] + CoA. Functionally, palmitoyl acyltransferase. This chain is Probable protein S-acyltransferase 9 (PAT09), found in Arabidopsis thaliana (Mouse-ear cress).